We begin with the raw amino-acid sequence, 48 residues long: DNA-directed RNA polymerase subunit Rpo12 (48 aa).

Zn(2+) contacts are provided by C9, C26, and C29.

This sequence belongs to the archaeal Rpo12/eukaryotic RPC10 RNA polymerase subunit family. In terms of assembly, part of the RNA polymerase complex. The cofactor is Zn(2+).

The protein localises to the cytoplasm. The enzyme catalyses RNA(n) + a ribonucleoside 5'-triphosphate = RNA(n+1) + diphosphate. Functionally, DNA-dependent RNA polymerase (RNAP) catalyzes the transcription of DNA into RNA using the four ribonucleoside triphosphates as substrates. The protein is DNA-directed RNA polymerase subunit Rpo12 of Saccharolobus islandicus (strain Y.N.15.51 / Yellowstone #2) (Sulfolobus islandicus).